A 211-amino-acid chain; its full sequence is tRNA (guanine-N(7)-)-methyltransferase (211 aa).

4 residues coordinate S-adenosyl-L-methionine: Glu44, Asp69, Asp96, and Asp118. Residue Asp118 is part of the active site. Lys122 serves as a coordination point for substrate. Residues 124-129 are interaction with RNA; that stretch reads RHEKRR. Residues Asp154 and 191–194 contribute to the substrate site; that span reads TEYE.

Belongs to the class I-like SAM-binding methyltransferase superfamily. TrmB family.

The catalysed reaction is guanosine(46) in tRNA + S-adenosyl-L-methionine = N(7)-methylguanosine(46) in tRNA + S-adenosyl-L-homocysteine. The protein operates within tRNA modification; N(7)-methylguanine-tRNA biosynthesis. In terms of biological role, catalyzes the formation of N(7)-methylguanine at position 46 (m7G46) in tRNA. The protein is tRNA (guanine-N(7)-)-methyltransferase of Streptococcus pneumoniae (strain Taiwan19F-14).